The primary structure comprises 194 residues: dCTP deaminase (194 aa).

DCTP contacts are provided by residues 110 to 115 (RSSLAR), Asp128, 136 to 138 (VLE), Tyr171, Lys178, and Gln182. The Proton donor/acceptor role is filled by Glu138. The segment at 172 to 194 (NKRKSAKYRDQQEAVASRISQDK) is disordered.

Belongs to the dCTP deaminase family. In terms of assembly, homotrimer.

It catalyses the reaction dCTP + H2O + H(+) = dUTP + NH4(+). It functions in the pathway pyrimidine metabolism; dUMP biosynthesis; dUMP from dCTP (dUTP route): step 1/2. Functionally, catalyzes the deamination of dCTP to dUTP. This chain is dCTP deaminase, found in Shewanella loihica (strain ATCC BAA-1088 / PV-4).